Consider the following 357-residue polypeptide: Protein-glutamate methylesterase/protein-glutamine glutaminase (357 aa).

The Response regulatory domain maps to 3–120 (RVLVVDDSAF…SLDLYKIKEQ (118 aa)). D54 is modified (4-aspartylphosphate). The 195-residue stretch at 161–355 (PGTGRQIVCI…ASITSCVKKE (195 aa)) folds into the CheB-type methylesterase domain. Catalysis depends on residues S173, H200, and D296.

Belongs to the CheB family. Phosphorylated by CheA. Phosphorylation of the N-terminal regulatory domain activates the methylesterase activity.

The protein resides in the cytoplasm. It carries out the reaction [protein]-L-glutamate 5-O-methyl ester + H2O = L-glutamyl-[protein] + methanol + H(+). The enzyme catalyses L-glutaminyl-[protein] + H2O = L-glutamyl-[protein] + NH4(+). Involved in the modulation of the chemotaxis system; catalyzes the demethylation of specific methylglutamate residues introduced into the chemoreceptors (methyl-accepting chemotaxis proteins) by CheR. B.subtilis has an effective methylation-independent adaptation system but must utilize the methylation system for adaptation to high concentrations of attractant. This chain is Protein-glutamate methylesterase/protein-glutamine glutaminase, found in Bacillus subtilis (strain 168).